Reading from the N-terminus, the 366-residue chain is Spermidine/putrescine import ATP-binding protein PotA (366 aa).

Residues 14–247 (ISARALRKVY…PADRFVADFI (234 aa)) enclose the ABC transporter domain. Residue 49-56 (GPSGCGKT) coordinates ATP.

This sequence belongs to the ABC transporter superfamily. Spermidine/putrescine importer (TC 3.A.1.11.1) family. As to quaternary structure, the complex is composed of two ATP-binding proteins (PotA), two transmembrane proteins (PotB and PotC) and a solute-binding protein (PotD).

Its subcellular location is the cell inner membrane. It carries out the reaction ATP + H2O + polyamine-[polyamine-binding protein]Side 1 = ADP + phosphate + polyamineSide 2 + [polyamine-binding protein]Side 1.. Functionally, part of the ABC transporter complex PotABCD involved in spermidine/putrescine import. Responsible for energy coupling to the transport system. The chain is Spermidine/putrescine import ATP-binding protein PotA from Ruegeria pomeroyi (strain ATCC 700808 / DSM 15171 / DSS-3) (Silicibacter pomeroyi).